Consider the following 433-residue polypeptide: C4-dicarboxylate transport protein (433 aa).

Transmembrane regions (helical) follow at residues 8–28 (ILYV…HFWP), 44–64 (LIKM…IAGM), 78–98 (LLYF…AAHL), 148–168 (GDIL…AVLG), 188–208 (IVHV…AFTI), 222–242 (LIGT…GTIA), 307–327 (IYMT…LTLM), and 355–375 (AATL…ILGI).

Belongs to the dicarboxylate/amino acid:cation symporter (DAACS) (TC 2.A.23) family.

Its subcellular location is the cell inner membrane. Responsible for the transport of dicarboxylates such as succinate, fumarate, and malate from the periplasm across the membrane. The sequence is that of C4-dicarboxylate transport protein from Cupriavidus taiwanensis (strain DSM 17343 / BCRC 17206 / CCUG 44338 / CIP 107171 / LMG 19424 / R1) (Ralstonia taiwanensis (strain LMG 19424)).